The following is a 712-amino-acid chain: Anaerobic ribonucleoside-triphosphate reductase (712 aa).

The ATP-cone domain maps to 3-92 (PHVMKRDGCK…EYRHDRDIER (90 aa)). Positions 583–708 (KKVNPYDKID…VKRRVKHLGN (126 aa)) constitute a Glycine radical domain. C644, C647, C662, and C665 together coordinate Zn(2+). A Glycine radical modification is found at G681.

It belongs to the anaerobic ribonucleoside-triphosphate reductase family. As to quaternary structure, homodimer. Forms a tetramer composed of two NrdD and two NrdG subunits.

The enzyme catalyses a ribonucleoside 5'-triphosphate + formate + H(+) = a 2'-deoxyribonucleoside 5'-triphosphate + CO2 + H2O. It carries out the reaction formate + ATP + H(+) = dATP + CO2 + H2O. The catalysed reaction is CTP + formate + H(+) = dCTP + CO2 + H2O. It catalyses the reaction GTP + formate + H(+) = dGTP + CO2 + H2O. The enzyme catalyses UTP + formate + H(+) = dUTP + CO2 + H2O. Its activity is regulated as follows. Activated under anaerobic conditions by NrdG, a tightly associated activase. Activation involves the formation of a glycyl radical at Gly-681. Exposure of the activated reductase to oxygen leads to C-terminal truncation and inactivation of the protein, by cleavage at the N-terminal side of Gly-681. The presence of zinc protects the protein from proteolysis and prevents the formation of disulfide bridges within it. The enzyme shows a basal activity in the absence of any effector, but reduction is stimulated up to 10-fold by an appropriate modulator (dGTP for ATP reduction, ATP for CTP and UTP reduction, and dTTP for GTP reduction). dGTP and dTTP inhibit the reduction of the incorrect substrate, and dATP inhibits reduction of all four. These modulators act as allosteric effectors. In terms of biological role, catalyzes the conversion of ribonucleotides into deoxyribonucleotides, which are required for DNA synthesis and repair. Can reduce each of the four common ribonucleoside triphosphates. The protein is Anaerobic ribonucleoside-triphosphate reductase of Escherichia coli (strain K12).